The primary structure comprises 347 residues: Heme A synthase (347 aa).

8 helical membrane passes run 14 to 34 (VKIW…IGGI), 96 to 116 (FHRL…LYFM), 129 to 149 (FILI…MVKS), 162 to 182 (LAMH…HFLL), 199 to 219 (VFYI…LVAG), 260 to 280 (FIHE…LLVL), 287 to 307 (MYLL…TFIY), and 311 to 331 (IILA…SIYL). Residue His262 coordinates heme. Heme is bound at residue His317.

This sequence belongs to the COX15/CtaA family. Type 2 subfamily. In terms of assembly, interacts with CtaB. Heme b serves as cofactor.

It is found in the cell membrane. It carries out the reaction Fe(II)-heme o + 2 A + H2O = Fe(II)-heme a + 2 AH2. It functions in the pathway porphyrin-containing compound metabolism; heme A biosynthesis; heme A from heme O: step 1/1. Functionally, catalyzes the conversion of heme O to heme A by two successive hydroxylations of the methyl group at C8. The first hydroxylation forms heme I, the second hydroxylation results in an unstable dihydroxymethyl group, which spontaneously dehydrates, resulting in the formyl group of heme A. This Ehrlichia ruminantium (strain Welgevonden) protein is Heme A synthase.